We begin with the raw amino-acid sequence, 751 residues long: MKFGKEYVAQMIPEWQQAYMDYTCLKTILREIKTSQKRSESQGVLKRKLSGRRNFSGLTKRYSRTFSSRDLENHDIMVHATTGDDGFEKYETTILKVSEVGRESELVFFKTLDLEFDKVNRFYRSNVEELVKEAVVLNRQMDALIAYRIKLDQPSTSWSCSETVSVDINALDSKEQKGKTLAEEMGIKVEENVSNGGDSTKETAPEALSVLDRIRLNKNQENPLSTIRNVLKLSNKEDIKFTKENLKKIEERLKNVFIEFYRKLRHLKNYSFLNTLAISKIMKKYDKIALRNAAKLYMEMVDKSYLTSSDEINKLMLRVESIFVEHFAGSNRSKGMNLLRPKVTKEKHRITFSTGFFVGCTVSLVIALGLFIHARNIMGAVGHKLYMETMFPLYSLFAFVVLHMIMYASNIYFWKRYRVNYPFIFGFKEGTELGYGHVLLLSFGLGTLALCAVLVNMDMEMDPNTNDYKTITELVPLFVVALVIAISVCPFNIFYRSSRFFFLMVLFRCIAAPLYKVNLPDFFLADQLTSQVQALRSLEFYICYYGWGDFKQRQSTCKSSDVYSTFYFIVAVIPYWSRFLQCVRRLIEEKDVSQGFNALKYLLTIVAVCLRTAFSINRGNDWKIAAWVFSGLATFYGTYWDIVYDWGLLHRPSKSWLREKLLVPHKSVYYVAMVVNVVLRLAWLQTVLDFNISFLHRETMVALIAILEIIRRGIWNFFRLENEHLNNVGKFRAFKSVPLPFNYDEEEDRDS.

The region spanning 1 to 299 (MKFGKEYVAQ…LRNAAKLYME (299 aa)) is the SPX domain. Residues 1–351 (MKFGKEYVAQ…KVTKEKHRIT (351 aa)) are Cytoplasmic-facing. The helical transmembrane segment at 352–372 (FSTGFFVGCTVSLVIALGLFI) threads the bilayer. The Extracellular portion of the chain corresponds to 373-392 (HARNIMGAVGHKLYMETMFP). A helical transmembrane segment spans residues 393 to 413 (LYSLFAFVVLHMIMYASNIYF). At 414 to 434 (WKRYRVNYPFIFGFKEGTELG) the chain is on the cytoplasmic side. A helical membrane pass occupies residues 435–455 (YGHVLLLSFGLGTLALCAVLV). Over 456–473 (NMDMEMDPNTNDYKTITE) the chain is Extracellular. Residues 474-494 (LVPLFVVALVIAISVCPFNIF) form a helical membrane-spanning segment. Over 495 to 623 (YRSSRFFFLM…FSINRGNDWK (129 aa)) the chain is Cytoplasmic. An EXS domain is found at 558–751 (KSSDVYSTFY…NYDEEEDRDS (194 aa)). Residues 624 to 644 (IAAWVFSGLATFYGTYWDIVY) traverse the membrane as a helical segment. The Extracellular portion of the chain corresponds to 645–667 (DWGLLHRPSKSWLREKLLVPHKS). The chain crosses the membrane as a helical span at residues 668-688 (VYYVAMVVNVVLRLAWLQTVL). Topologically, residues 689-751 (DFNISFLHRE…NYDEEEDRDS (63 aa)) are cytoplasmic.

This sequence belongs to the SYG1 (TC 2.A.94) family. In terms of tissue distribution, expressed in root epidermis, leaf hydathodes, trichomes and petioles, stem vascular cylinder, receptacle, stigma apex and pollen grains.

It localises to the cell membrane. Functionally, may transport inorganic phosphate (Pi). This is Phosphate transporter PHO1 homolog 8 (PHO1-H8) from Arabidopsis thaliana (Mouse-ear cress).